The sequence spans 87 residues: Large ribosomal subunit protein bL31B (87 aa).

It belongs to the bacterial ribosomal protein bL31 family. Type B subfamily. As to quaternary structure, part of the 50S ribosomal subunit.

This chain is Large ribosomal subunit protein bL31B, found in Escherichia coli O8 (strain IAI1).